A 323-amino-acid polypeptide reads, in one-letter code: Lipoyl synthase (323 aa).

The [4Fe-4S] cluster site is built by cysteine 61, cysteine 66, cysteine 72, cysteine 87, cysteine 91, cysteine 94, and serine 300. One can recognise a Radical SAM core domain in the interval 73-289 (WDKKHATFMI…ETVAYSKGFL (217 aa)).

Belongs to the radical SAM superfamily. Lipoyl synthase family. Requires [4Fe-4S] cluster as cofactor.

Its subcellular location is the cytoplasm. The catalysed reaction is [[Fe-S] cluster scaffold protein carrying a second [4Fe-4S](2+) cluster] + N(6)-octanoyl-L-lysyl-[protein] + 2 oxidized [2Fe-2S]-[ferredoxin] + 2 S-adenosyl-L-methionine + 4 H(+) = [[Fe-S] cluster scaffold protein] + N(6)-[(R)-dihydrolipoyl]-L-lysyl-[protein] + 4 Fe(3+) + 2 hydrogen sulfide + 2 5'-deoxyadenosine + 2 L-methionine + 2 reduced [2Fe-2S]-[ferredoxin]. Its pathway is protein modification; protein lipoylation via endogenous pathway; protein N(6)-(lipoyl)lysine from octanoyl-[acyl-carrier-protein]: step 2/2. Catalyzes the radical-mediated insertion of two sulfur atoms into the C-6 and C-8 positions of the octanoyl moiety bound to the lipoyl domains of lipoate-dependent enzymes, thereby converting the octanoylated domains into lipoylated derivatives. The sequence is that of Lipoyl synthase from Rhizobium etli (strain ATCC 51251 / DSM 11541 / JCM 21823 / NBRC 15573 / CFN 42).